We begin with the raw amino-acid sequence, 942 residues long: Endoprotease bli-4 (942 aa).

The first 22 residues, 1 to 22, serve as a signal peptide directing secretion; that stretch reads MRISIGRIAWQILAVLIAVAFT. Residues 23 to 116 constitute a propeptide that is removed on maturation; the sequence is IEHDSICDES…EQRPKKRVKR (94 aa). Over 117 to 871 the chain is Lumenal; that stretch reads DYILLDNDVH…TLLIDSNKSS (755 aa). Residue Asp-124 participates in Ca(2+) binding. The interval 130–160 is disordered; it reads PFRRSVLNRDGTRRAQRQQPQSPREIPSLPF. The region spanning 168–483 is the Peptidase S8 domain; the sequence is QWYLHGGAVG…YGLIDGGALV (316 aa). N-linked (GlcNAc...) asparagine glycosylation is present at Asn-195. Asp-202 (charge relay system) is an active-site residue. Asp-203 is a substrate binding site. The Ca(2+) site is built by Asp-211, Asp-223, Asp-228, and Asp-230. A disordered region spans residues 211–242; it reads DLAANYDPLASTDINDHDDDPTPQNNGDNKHG. Residue 238 to 239 participates in substrate binding; sequence DN. His-241 functions as the Charge relay system in the catalytic mechanism. Ca(2+) is bound by residues Leu-252, Asn-255, Gln-257, and Gly-259. Intrachain disulfides connect Cys-258–Cys-407 and Cys-350–Cys-380. Substrate is bound by residues Glu-283, 300–305, Asp-311, and 339–342; these read SWGPED and ASGN. Asp-305 provides a ligand contact to Ca(2+). Residue Asp-348 participates in Ca(2+) binding. Substrate-binding residues include Asp-353 and Tyr-355. Glu-378 is a binding site for Ca(2+). Ser-415 (charge relay system) is an active-site residue. Residue Ser-415 coordinates substrate. Positions 491–629 constitute a P/Homo B domain; sequence TVPEQHICTY…TLLLYGTADP (139 aa). A disulfide bond links Cys-498 and Cys-527. An N-linked (GlcNAc...) asparagine glycan is attached at Asn-519. FU repeat units lie at residues 674 to 723, 725 to 777, and 804 to 850; these read NCHD…YYLD, DKCK…LVAD, and GKCD…STKS. Asn-868 carries an N-linked (GlcNAc...) asparagine glycan. A helical membrane pass occupies residues 872-892; it reads GFGLMFWIVVSLIAACGICAC. The Cytoplasmic segment spans residues 893-942; it reads KKCASETKSSNVEYAPLAQYNATNGAINLGAHTDDEDDDEDEVFVNPQIV. Residues 922–942 form a disordered region; it reads GAHTDDEDDDEDEVFVNPQIV. Positions 926–935 are enriched in acidic residues; the sequence is DDEDDDEDEV.

This sequence belongs to the peptidase S8 family. Furin subfamily. Requires Ca(2+) as cofactor. As to expression, in larvae and adults, expressed in all hypodermal cells, vulva and ventral nerve cords. Most highly expressed isoform in the embryonic epidermis. In terms of tissue distribution, expressed primarily in the germline. As to expression, expressed primarily in pharyngeal epithelial cells.

The protein localises to the membrane. Its function is as follows. Serine endoprotease which cleaves proproteins at paired basic amino acids at the consensus RX(K/R)R motif. Involved in N-terminal processing of cuticle collagens and plays a role in cuticle biosynthesis. May cleave both sqt-3 and dpy-17 collagens to promote their secretion. Acts in ASEL sensory neurons to regulate high salt chemotaxis responses probably by cleaving insulin-like protein ins-6 into its mature and active form. Essential for embryonic and larval development. Functionally, involved in cuticle biosynthesis but dispensable for larval development. This chain is Endoprotease bli-4 (bli-4), found in Caenorhabditis elegans.